The chain runs to 251 residues: Cell division protein ZapD (251 aa).

Belongs to the ZapD family. As to quaternary structure, interacts with FtsZ.

It localises to the cytoplasm. Cell division factor that enhances FtsZ-ring assembly. Directly interacts with FtsZ and promotes bundling of FtsZ protofilaments, with a reduction in FtsZ GTPase activity. This Azoarcus sp. (strain BH72) protein is Cell division protein ZapD.